Consider the following 234-residue polypeptide: Ribose-5-phosphate isomerase A (234 aa).

Residues 34–37, 90–93, and 103–106 contribute to the substrate site; these read TGST, DGAD, and KGGG. Residue E112 is the Proton acceptor of the active site. K130 provides a ligand contact to substrate.

This sequence belongs to the ribose 5-phosphate isomerase family. As to quaternary structure, homodimer.

It carries out the reaction aldehydo-D-ribose 5-phosphate = D-ribulose 5-phosphate. It participates in carbohydrate degradation; pentose phosphate pathway; D-ribose 5-phosphate from D-ribulose 5-phosphate (non-oxidative stage): step 1/1. Functionally, catalyzes the reversible conversion of ribose-5-phosphate to ribulose 5-phosphate. In Methanosarcina acetivorans (strain ATCC 35395 / DSM 2834 / JCM 12185 / C2A), this protein is Ribose-5-phosphate isomerase A.